The primary structure comprises 147 residues: Endoribonuclease YbeY (147 aa).

The Zn(2+) site is built by His-107, His-111, and His-117.

The protein belongs to the endoribonuclease YbeY family. It depends on Zn(2+) as a cofactor.

It is found in the cytoplasm. Single strand-specific metallo-endoribonuclease involved in late-stage 70S ribosome quality control and in maturation of the 3' terminus of the 16S rRNA. The polypeptide is Endoribonuclease YbeY (Solibacter usitatus (strain Ellin6076)).